Here is a 502-residue protein sequence, read N- to C-terminus: Archaemetzincin-1 (502 aa).

Residue His262 coordinates Zn(2+). Glu263 serves as the catalytic Proton acceptor. Residues His266, Cys273, Cys278, Cys297, and Cys300 each contribute to the Zn(2+) site. A disordered region spans residues 336 to 383; the sequence is GEPSVSEDTLPFSADSGMGCESDTEPVTSPSEPVTPDGWSHPFPDGPE.

The protein belongs to the peptidase M54 family. Zn(2+) is required as a cofactor.

In terms of biological role, probable zinc metalloprotease. The protein is Archaemetzincin-1 (Amz1) of Mus musculus (Mouse).